Consider the following 557-residue polypeptide: Small ribosomal subunit protein bS1 (557 aa).

4 consecutive S1 motif domains span residues 21–87 (GSIV…LSRE), 105–171 (AETV…VSRR), 192–260 (GMEV…LGLK), and 277–347 (GTKL…LGLK). Residues Lys-229, Lys-279, and Lys-363 each carry the N6-acetyllysine modification. 2 consecutive S1 motif domains span residues 364 to 434 (GDRV…LGVK) and 451 to 520 (GAIV…LSVR).

The protein belongs to the bacterial ribosomal protein bS1 family. As to quaternary structure, part of the 30S ribosomal subunit. Some nascent polypeptide chains are able to cross-link to this protein in situ. Can be cross-linked to mRNA in the ribosome. In terms of processing, phosphorylated; probably on a serine.

Functionally, required for translation of most natural mRNAs except for leaderless mRNA. Binds mRNA upstream of the Shine-Dalgarno (SD) sequence and helps it bind to the 30S ribosomal subunit; acts as an RNA chaperone to unfold structured mRNA on the ribosome but is not essential for mRNAs with strong SDs and little 5'-UTR structure, thus it may help fine-tune which mRNAs that are translated. Unwinds dsRNA by binding to transiently formed ssRNA regions; binds about 10 nucleotides. Has a preference for polypyrimidine tracts. Negatively autoregulates its own translation. In Escherichia coli O157:H7, this protein is Small ribosomal subunit protein bS1 (rpsA).